The sequence spans 352 residues: rRNA 2'-O-methyltransferase fibrillarin (352 aa).

The disordered stretch occupies residues 1–115; sequence MGRPEFNRGG…GGAGGMRGGK (115 aa). An asymmetric dimethylarginine mark is found at Arg8, Arg16, Arg19, Arg23, Arg27, Arg35, Arg43, Arg51, Arg55, Arg58, Arg63, Arg67, Arg70, Arg75, Arg81, Arg85, Arg91, Arg95, Arg98, Arg102, Arg105, and Arg112. A compositionally biased stretch (gly residues) spans 8-18; it reads RGGGGGGFRGG. Residues 26–59 show a composition bias toward gly residues; sequence SRGGFGGGGRGGYGGGDRGSFGGGDRGGFRGGRG. A compositionally biased stretch (gly residues) spans 66–113; sequence FRGGRGGGDRGGFGGRGSPRGGFGGRGSPRGGRGSPRGGRGGAGGMRG. S-adenosyl-L-methionine-binding positions include 203-204, 222-223, 247-248, and 267-270; these read TT, EF, DA, and DVAQ.

Belongs to the methyltransferase superfamily. Fibrillarin family. In terms of assembly, component of box C/D small nucleolar ribonucleoprotein (snoRNP) particles. It is associated with the U3, U8 and U13 small nuclear RNAs. By homology to other fibrillarins, some or all of the N-terminal domain arginines are modified to asymmetric dimethylarginine (DMA).

The protein localises to the nucleus. Its subcellular location is the nucleolus. It is found in the nucleoplasm. It carries out the reaction L-glutaminyl-[histone H2A] + S-adenosyl-L-methionine = N(5)-methyl-L-glutaminyl-[histone H2A] + S-adenosyl-L-homocysteine + H(+). Functionally, S-adenosyl-L-methionine-dependent methyltransferase that has the ability to methylate both RNAs and proteins. Involved in pre-rRNA processing. Utilizes the methyl donor S-adenosyl-L-methionine to catalyze the site-specific 2'-hydroxyl methylation of ribose moieties in pre-ribosomal RNA. Site specificity is provided by a guide RNA that base pairs with the substrate. Methylation occurs at a characteristic distance from the sequence involved in base pairing with the guide RNA. Also acts as a protein methyltransferase by mediating methylation of 'Gln-105' of histone H2A (H2AQ105me), a modification that impairs binding of the FACT complex and is specifically present at 35S ribosomal DNA locus. Plays a role in modulation of nucleolus size most likely through regulating the ribosomal RNA (rRNA) pool. In Caenorhabditis elegans, this protein is rRNA 2'-O-methyltransferase fibrillarin.